The primary structure comprises 541 residues: Metal transporter Nramp1 (541 aa).

Asparagine 17 is a glycosylation site (N-linked (GlcNAc...) asparagine). The next 10 helical transmembrane spans lie at 45 to 65, 78 to 98, 122 to 142, 153 to 173, 182 to 202, 222 to 242, 271 to 291, 315 to 335, 371 to 391, and 392 to 412; these read LFAYMGPGFLVSIAYIDPGNF, ELLWIILVASCAALIIQSLAA, FILWVLAEIAIVACDIPEVIG, IPVWIGVLLTGLSTLVLLALQ, LFIAFLVCTIAGCFFAELGYA, GAAGLAISLLGAMVMPHNLFL, GFALVLAFLINVSIISVSGAV, FLLENVLGSWSSKLFAIALLA, SLAIVPSLIVAIIGGSSGAGK, and LIIIASMILSFELPFALVPLL. An N-linked (GlcNAc...) asparagine glycan is attached at asparagine 426. Helical transmembrane passes span 430 to 450 and 465 to 485; these read ISSITWVIGFLIMAINIYYLA and VAAIFLGIFGFLGMAVYLAGV. N-linked (GlcNAc...) asparagine glycosylation is present at asparagine 511.

It belongs to the NRAMP (TC 2.A.55) family.

The protein resides in the membrane. Functionally, probable divalent metal transporter. This Populus trichocarpa (Western balsam poplar) protein is Metal transporter Nramp1.